A 1407-amino-acid polypeptide reads, in one-letter code: Probable phosphoribosylformylglycinamidine synthase, chloroplastic/mitochondrial (1407 aa).

The transit peptide at M1–R53 directs the protein to the chloroplast and mitochondrion. ATP contacts are provided by residues G407 to D418, Q487 to Y489, and A786. Mg(2+) is bound by residues D787, E826, N830, and D989. S991 is an ATP binding site. Positions K1141 to T1381 constitute a Glutamine amidotransferase type-1 domain. C1235 (nucleophile) is an active-site residue. Active-site residues include H1366 and E1368.

The protein in the N-terminal section; belongs to the FGAMS family.

It localises to the plastid. It is found in the chloroplast. The protein localises to the mitochondrion. It catalyses the reaction N(2)-formyl-N(1)-(5-phospho-beta-D-ribosyl)glycinamide + L-glutamine + ATP + H2O = 2-formamido-N(1)-(5-O-phospho-beta-D-ribosyl)acetamidine + L-glutamate + ADP + phosphate + H(+). It participates in purine metabolism; IMP biosynthesis via de novo pathway; 5-amino-1-(5-phospho-D-ribosyl)imidazole from N(2)-formyl-N(1)-(5-phospho-D-ribosyl)glycinamide: step 1/2. Its function is as follows. Essential to the male gametophyte development. Phosphoribosylformylglycinamidine synthase involved in the purines biosynthetic pathway. Catalyzes the ATP-dependent conversion of formylglycinamide ribonucleotide (FGAR) and glutamine to yield formylglycinamidine ribonucleotide (FGAM) and glutamate. The sequence is that of Probable phosphoribosylformylglycinamidine synthase, chloroplastic/mitochondrial from Arabidopsis thaliana (Mouse-ear cress).